The following is a 256-amino-acid chain: Thiazole synthase (256 aa).

The active-site Schiff-base intermediate with DXP is the Lys-96. 1-deoxy-D-xylulose 5-phosphate is bound by residues Gly-157, 184-185, and 206-207; these read AG and NT.

This sequence belongs to the ThiG family. As to quaternary structure, homotetramer. Forms heterodimers with either ThiH or ThiS.

The protein resides in the cytoplasm. The enzyme catalyses [ThiS sulfur-carrier protein]-C-terminal-Gly-aminoethanethioate + 2-iminoacetate + 1-deoxy-D-xylulose 5-phosphate = [ThiS sulfur-carrier protein]-C-terminal Gly-Gly + 2-[(2R,5Z)-2-carboxy-4-methylthiazol-5(2H)-ylidene]ethyl phosphate + 2 H2O + H(+). The protein operates within cofactor biosynthesis; thiamine diphosphate biosynthesis. Catalyzes the rearrangement of 1-deoxy-D-xylulose 5-phosphate (DXP) to produce the thiazole phosphate moiety of thiamine. Sulfur is provided by the thiocarboxylate moiety of the carrier protein ThiS. In vitro, sulfur can be provided by H(2)S. The polypeptide is Thiazole synthase (Brucella anthropi (strain ATCC 49188 / DSM 6882 / CCUG 24695 / JCM 21032 / LMG 3331 / NBRC 15819 / NCTC 12168 / Alc 37) (Ochrobactrum anthropi)).